A 77-amino-acid polypeptide reads, in one-letter code: uncharacterized protein (77 aa).

This is an uncharacterized protein from Homo sapiens (Human).